A 1381-amino-acid polypeptide reads, in one-letter code: DNA-directed RNA polymerase subunit beta (1381 aa).

Belongs to the RNA polymerase beta chain family. As to quaternary structure, the RNAP catalytic core consists of 2 alpha, 1 beta, 1 beta' and 1 omega subunit. When a sigma factor is associated with the core the holoenzyme is formed, which can initiate transcription.

It catalyses the reaction RNA(n) + a ribonucleoside 5'-triphosphate = RNA(n+1) + diphosphate. In terms of biological role, DNA-dependent RNA polymerase catalyzes the transcription of DNA into RNA using the four ribonucleoside triphosphates as substrates. This chain is DNA-directed RNA polymerase subunit beta, found in Halorhodospira halophila (strain DSM 244 / SL1) (Ectothiorhodospira halophila (strain DSM 244 / SL1)).